We begin with the raw amino-acid sequence, 559 residues long: DNA ligase (559 aa).

Position 247 (glutamate 247) interacts with ATP. Residue lysine 249 is the N6-AMP-lysine intermediate of the active site. ATP-binding residues include arginine 254, arginine 269, glutamate 299, phenylalanine 339, arginine 414, and lysine 420.

It belongs to the ATP-dependent DNA ligase family. Requires Mg(2+) as cofactor.

The enzyme catalyses ATP + (deoxyribonucleotide)n-3'-hydroxyl + 5'-phospho-(deoxyribonucleotide)m = (deoxyribonucleotide)n+m + AMP + diphosphate.. Its function is as follows. DNA ligase that seals nicks in double-stranded DNA during DNA replication, DNA recombination and DNA repair. In Pyrococcus abyssi (strain GE5 / Orsay), this protein is DNA ligase.